We begin with the raw amino-acid sequence, 250 residues long: Methylthioribulose-1-phosphate dehydratase (250 aa).

Cys-103 serves as a coordination point for substrate. 2 residues coordinate Zn(2+): His-121 and His-123. Glu-146 serves as the catalytic Proton donor/acceptor. Position 211 (His-211) interacts with Zn(2+).

It belongs to the aldolase class II family. MtnB subfamily. Requires Zn(2+) as cofactor.

The protein resides in the cytoplasm. It catalyses the reaction 5-(methylsulfanyl)-D-ribulose 1-phosphate = 5-methylsulfanyl-2,3-dioxopentyl phosphate + H2O. Its pathway is amino-acid biosynthesis; L-methionine biosynthesis via salvage pathway; L-methionine from S-methyl-5-thio-alpha-D-ribose 1-phosphate: step 2/6. Its function is as follows. Catalyzes the dehydration of methylthioribulose-1-phosphate (MTRu-1-P) into 2,3-diketo-5-methylthiopentyl-1-phosphate (DK-MTP-1-P). The polypeptide is Methylthioribulose-1-phosphate dehydratase (Clavispora lusitaniae (strain ATCC 42720) (Yeast)).